A 442-amino-acid polypeptide reads, in one-letter code: Probable carboxypeptidase PABG_01461 (442 aa).

The N-terminal stretch at 1–20 is a signal peptide; the sequence is MKLQYLVALLSVQAVPPVTA. Residue N102 is glycosylated (N-linked (GlcNAc...) asparagine). D160 is a binding site for Zn(2+). E192 acts as the Proton acceptor in catalysis. E193 is a Zn(2+) binding site. N343 carries N-linked (GlcNAc...) asparagine glycosylation.

Belongs to the peptidase M20A family. Requires Zn(2+) as cofactor.

It localises to the secreted. The chain is Probable carboxypeptidase PABG_01461 from Paracoccidioides brasiliensis (strain Pb03).